Reading from the N-terminus, the 413-residue chain is N-acylneuraminate cytidylyltransferase (413 aa).

Belongs to the CMP-NeuNAc synthase family. The cofactor is Mg(2+). Mn(2+) serves as cofactor.

It is found in the cytoplasm. It carries out the reaction an N-acylneuraminate + CTP = a CMP-N-acyl-beta-neuraminate + diphosphate. Its function is as follows. Catalyzes the formation of CMP-N-acetylneuraminic acid (CMP-NeuNAc), which is essential for the formation of the capsule. The sequence is that of N-acylneuraminate cytidylyltransferase (neuA) from Streptococcus agalactiae serotype Ia (strain ATCC 27591 / A909 / CDC SS700).